A 153-amino-acid chain; its full sequence is ORM1-like protein 2 (153 aa).

Topologically, residues 1 to 21 are cytoplasmic; it reads MNVGVAHSEVNPNTRVMNSRG. The next 2 helical transmembrane spans lie at 22-42 and 43-63; these read IWLAYIILVGLLHMVLLSIPF and FSIPVVWTLTNVIHNLATYVF. Residues 64 to 105 lie on the Cytoplasmic side of the membrane; the sequence is LHTVKGTPFETPDQGKARLLTHWEQMDYGLQFTSSRKFLSIS. Residues 106–126 form a helical membrane-spanning segment; the sequence is PIVLYLLASFYTKYDAAHFLI. At 127-153 the chain is on the extracellular side; it reads NTASLLSVLLPKLPQFHGVRVFGINKY.

The protein belongs to the ORM family. Ceramide-sensitive subunit of the serine palmitoyltransferase (SPT) complex, which is also composed of SPTLC1, SPTLC2/3 and SPTSSA/B. As to expression, widely expressed. Expressed in adult and fetal heart, brain, lung, liver, skeletal muscle and kidney. Expressed in adult pancreas and placenta and in fetal spleen abd thymus.

The protein resides in the endoplasmic reticulum membrane. Plays an essential role in the homeostatic regulation of sphingolipid de novo biosynthesis by modulating the activity of the serine palmitoyltransferase (SPT) in response to ceramide levels. When complexed to SPT, the binding of ceramides to its N-terminus stabilizes a conformation that block SPT substrate entry, hence preventing SPT catalytic activity. Through this mechanism, maintains ceramide levels at sufficient concentrations for the production of complex sphingolipids, but which prevents the accumulation of ceramides to levels that trigger apoptosis. The sequence is that of ORM1-like protein 2 (ORMDL2) from Homo sapiens (Human).